The sequence spans 567 residues: GBF-interacting protein 1 (567 aa).

3 disordered regions span residues 70–150 (ERKK…PSGI), 164–192 (DKVDTEEQPLSKATSSSKDVVEPDKSKES), and 545–567 (PIGPSHVTNQQPQAARTNLGNNY). Composition is skewed to polar residues over residues 91–102 (FASSYTDASNGR) and 121–136 (TASSAPNNARNDTKPS). The segment covering 182 to 191 (DVVEPDKSKE) has biased composition (basic and acidic residues). The span at 550–567 (HVTNQQPQAARTNLGNNY) shows a compositional bias: polar residues.

The protein belongs to the GIP1 family. Monomer, homodimer, homooligomer. Under non-reducing conditions, predominantly present in high molecular weight forms, but predominates in low molecular weight monomers under reducing conditions. Interacts with BZIP16, BZIP68 and GBF1. Interacts with LBD18. In terms of tissue distribution, expressed in roots, leaves, stems and flowers.

Its subcellular location is the nucleus. Plant specific protein that enhances G-box-binding factor (GBF) DNA binding activity. May function as a nuclear chaperone or lever and regulate the multimeric state of GBFs. May contribute to bZIP-mediated gene regulation. Is able to refold denatured rhodanese in vitro. Reduces DNA-binding activity of BZIP16, BZIP68 and GBF1 under non-reducing conditions through direct physical interaction. Acts as a negative co-regulator in red and blue light-mediated hypocotyl elongation. Functions to promote hypocotyl elongation during the early stages of seedling development by regulating the repression effect by BZIP16 and the activation effect by BZIP68 and GBF1 on LHCB2.4 expression. Enhances transcriptional activity of LBD18 in the EXP14 promoter. May act as a transcriptional coactivator of LBD18. The polypeptide is GBF-interacting protein 1 (Arabidopsis thaliana (Mouse-ear cress)).